The following is a 20-amino-acid chain: Ranalexin-1Ca (20 aa).

Cys14 and Cys20 are disulfide-bonded.

In terms of tissue distribution, expressed by the skin glands.

It is found in the secreted. Its function is as follows. Antibacterial activity against Gram-positive bacterium S.aureus (MIC=17 uM) and Gram-negative bacterium E.coli (MIC=4 uM). Has activity against C.albicans (MIC=14 uM). This Lithobates clamitans (Green frog) protein is Ranalexin-1Ca.